A 224-amino-acid polypeptide reads, in one-letter code: Glutathione S-transferase U1 (224 aa).

The GST N-terminal domain occupies Glu-6 to Pro-85. Residues Ser-16 to Pro-17, Asn-42 to Lys-43, Lys-56 to Val-57, and Glu-69 to Ser-70 contribute to the glutathione site. A GST C-terminal domain is found at Asp-90–Ile-217. Thr-151 carries the phosphothreonine modification.

This sequence belongs to the GST superfamily. Tau family.

Its subcellular location is the cytoplasm. It localises to the cytosol. It catalyses the reaction RX + glutathione = an S-substituted glutathione + a halide anion + H(+). Its function is as follows. May be involved in the conjugation of reduced glutathione to a wide number of exogenous and endogenous hydrophobic electrophiles and have a detoxification role against certain herbicides. The protein is Glutathione S-transferase U1 (GSTU1) of Arabidopsis thaliana (Mouse-ear cress).